The sequence spans 307 residues: tRNA dimethylallyltransferase (307 aa).

9 to 16 (GATGTGKS) contacts ATP. 11-16 (TGTGKS) lines the substrate pocket.

It belongs to the IPP transferase family. As to quaternary structure, monomer. Mg(2+) serves as cofactor.

The catalysed reaction is adenosine(37) in tRNA + dimethylallyl diphosphate = N(6)-dimethylallyladenosine(37) in tRNA + diphosphate. Functionally, catalyzes the transfer of a dimethylallyl group onto the adenine at position 37 in tRNAs that read codons beginning with uridine, leading to the formation of N6-(dimethylallyl)adenosine (i(6)A). In Clavibacter sepedonicus (Clavibacter michiganensis subsp. sepedonicus), this protein is tRNA dimethylallyltransferase.